Consider the following 553-residue polypeptide: Chaperonin GroEL (553 aa).

ATP-binding positions include 30-33 (TLGP), Lys-51, 87-91 (DGTTT), Gly-416, and Asp-496.

Belongs to the chaperonin (HSP60) family. In terms of assembly, forms a cylinder of 14 subunits composed of two heptameric rings stacked back-to-back. Interacts with the co-chaperonin GroES.

Its subcellular location is the cytoplasm. It carries out the reaction ATP + H2O + a folded polypeptide = ADP + phosphate + an unfolded polypeptide.. Its function is as follows. Together with its co-chaperonin GroES, plays an essential role in assisting protein folding. The GroEL-GroES system forms a nano-cage that allows encapsulation of the non-native substrate proteins and provides a physical environment optimized to promote and accelerate protein folding. This Alkalilimnicola ehrlichii (strain ATCC BAA-1101 / DSM 17681 / MLHE-1) protein is Chaperonin GroEL.